A 787-amino-acid chain; its full sequence is Integrin beta-3 (787 aa).

A signal peptide spans 1–25; the sequence is MRAQWPGQLWAALLALGALAGVVVG. Residues 26–717 are Extracellular-facing; the sequence is ESNICTTRGV…EEPECPKGPD (692 aa). Residues 29–75 enclose the PSI domain; it reads ICTTRGVNSCQQCLAVSPVCAWCSDETLSQGSPRCNLKENLLKDNCA. Intrachain disulfides connect Cys30–Cys48, Cys38–Cys460, Cys41–Cys63, Cys51–Cys74, Cys202–Cys209, Cys257–Cys298, Cys399–Cys411, Cys431–Cys458, Cys462–Cys482, Cys473–Cys485, Cys487–Cys496, Cys498–Cys528, Cys511–Cys526, Cys520–Cys531, Cys533–Cys546, Cys548–Cys569, Cys553–Cys567, Cys561–Cys572, and Cys574–Cys583. The 243-residue stretch at 134-376 folds into the VWFA domain; the sequence is DYPVDIYYLM…QLIVDAYGKI (243 aa). Residues Ser146 and Ser148 each coordinate Mg(2+). Ser148, Asp151, Asp152, and Asp183 together coordinate Ca(2+). A CX3CL1-binding region spans residues 202-209; that stretch reads CYNMKNAC. The segment at 202 to 209 is involved in CX3CL1-, NRG1-, FGF1- and IGF1-binding; it reads CYNMKNAC. Asn240, Asp242, Pro244, Glu245, and Asp276 together coordinate Ca(2+). Mg(2+) is bound at residue Glu245. The interval 292-312 is CX3CL1-binding; that stretch reads LPNDGHCHIGTDNHYSASTTM. Residues Asn345 and Asn396 are each glycosylated (N-linked (GlcNAc...) asparagine). 4 I-EGF domains span residues 462–497, 498–547, 548–584, and 585–624; these read CQAF…SMCE, CSEE…KYCE, CDDF…YYCN, and CTTR…DTCE. N-linked (GlcNAc...) asparagine glycosylation is present at Asn477. An N-linked (GlcNAc...) asparagine glycan is attached at Asn584. Disulfide bonds link Cys585–Cys608, Cys592–Cys606, Cys600–Cys611, Cys613–Cys623, Cys626–Cys629, Cys633–Cys680, Cys639–Cys660, Cys642–Cys656, and Cys688–Cys712. Residue Asn679 is glycosylated (N-linked (GlcNAc...) asparagine). Residues 718–740 form a helical membrane-spanning segment; the sequence is ILVVLLSVMGAILLIGLATLLIW. Residues 741–787 lie on the Cytoplasmic side of the membrane; the sequence is KLLITIHDRKEFAKFEEERARAKWDTANNPLYKEATSTFTNITYRGT. The residue at position 766 (Thr766) is a Phosphothreonine. Position 772 is a phosphotyrosine (Tyr772). The LIR signature appears at 776 to 782; it reads TSTFTNI. A Phosphothreonine modification is found at Thr778. Tyr784 is modified (phosphotyrosine).

It belongs to the integrin beta chain family. Heterodimer of an alpha and a beta subunit. Beta-3 (ITGB3) associates with either alpha-IIB (ITGA2B) or alpha-V (ITGAV). Interacts with FLNB and COMP. Interacts with PDIA6 following platelet stimulation. Interacts with SYK; upon activation by ITGB3 promotes platelet adhesion. Interacts with MYO10. Interacts with DAB2. Interacts with FERMT2. Integrin ITGAV:ITGB3 interacts with FBLN5 (via N-terminus). Interacts with EMP2; regulates the levels of the heterodimer ITGA5:ITGB3 integrin expression on the plasma membrane. ITGAV:ITGB3 interacts with CCN3. ITGAV:ITGB3 and ITGA2B:ITGB3 interact with SELP (via C-type lectin domain); the interaction mediates cell-cell interaction and adhesion. ITGAV:ITGB3 interacts with AGRA2. ITGAV:ITGB3 is found in a ternary complex with CX3CR1 and CX3CL1. ITGAV:ITGB3 is found in a ternary complex with NRG1 and ERBB3. ITGAV:ITGB3 is found in a ternary complex with FGF1 and FGFR1. ITGAV:ITGB3 interacts with FGF2; it is likely that FGF2 can simultaneously bind ITGAV:ITGB3 and FGF receptors. ITGAV:ITGB3 binds to IL1B. ITGAV:ITGB3 is found in a ternary complex with IGF1 and IGF1R. ITGAV:ITGB3 interacts with IGF2. ITGAV:ITGB3 interacts with FBN1. ITGAV:ITGB3 interacts with CD9, CD81 and CD151 (via second extracellular domain). Interacts (via the allosteric site (site 2)) with CXCL12 in a CXCR4-independent manner. Interacts with MXRA8/DICAM; the interaction inhibits ITGAV:ITGB3 heterodimer formation. ITGAV:ITGB3 interacts with PTN. Forms a complex with PTPRZ1 and PTN that stimulates endothelial cell migration through ITGB3 Tyr-772 phosphorylation. ITGAV:ITGB3 interacts with SLC6A4. Interacts with SLC6A4 (via C-terminus); this interaction regulates SLC6A4 trafficking. ITGA2B:ITGB3 interacts with PPIA/CYPA; the interaction is ROS and PPIase activity-dependent and is increased in the presence of thrombin. Interacts with tensin TNS3; TNS3 also interacts with PEAK1, thus acting as an adapter molecule to bridge the association of PEAK1 with ITGB3. Interacts with TM4SF19. Post-translationally, phosphorylated on tyrosine residues in response to thrombin-induced platelet aggregation. Probably involved in outside-in signaling.

It is found in the cell membrane. Its subcellular location is the cell projection. The protein localises to the lamellipodium membrane. The protein resides in the cell junction. It localises to the focal adhesion. It is found in the postsynaptic cell membrane. Its subcellular location is the synapse. Integrin alpha-V/beta-3 (ITGAV:ITGB3) is a receptor for cytotactin, fibronectin, laminin, matrix metalloproteinase-2, osteopontin, osteomodulin, prothrombin, thrombospondin, vitronectin and von Willebrand factor. Integrin alpha-IIB/beta-3 (ITGA2B:ITGB3) is a receptor for fibronectin, fibrinogen, plasminogen, prothrombin, thrombospondin and vitronectin. Integrins alpha-IIB/beta-3 and alpha-V/beta-3 recognize the sequence R-G-D in a wide array of ligands. Integrin alpha-IIB/beta-3 recognizes the sequence H-H-L-G-G-G-A-K-Q-A-G-D-V in fibrinogen gamma chain. Following activation integrin alpha-IIB/beta-3 brings about platelet/platelet interaction through binding of soluble fibrinogen. This step leads to rapid platelet aggregation which physically plugs ruptured endothelial surfaces. Fibrinogen binding enhances SELP expression in activated platelets. ITGAV:ITGB3 binds to fractalkine (CX3CL1) and acts as its coreceptor in CX3CR1-dependent fractalkine signaling. ITGAV:ITGB3 binds to NRG1 (via EGF domain) and this binding is essential for NRG1-ERBB signaling. ITGAV:ITGB3 binds to FGF1 and this binding is essential for FGF1 signaling. ITGAV:ITGB3 binds to FGF2 and this binding is essential for FGF2 signaling. ITGAV:ITGB3 binds to IGF1 and this binding is essential for IGF1 signaling. ITGAV:ITGB3 binds to IGF2 and this binding is essential for IGF2 signaling. ITGAV:ITGB3 binds to IL1B and this binding is essential for IL1B signaling. ITGAV:ITGB3 binds to PLA2G2A via a site (site 2) which is distinct from the classical ligand-binding site (site 1) and this induces integrin conformational changes and enhanced ligand binding to site 1. ITGAV:ITGB3 acts as a receptor for fibrillin-1 (FBN1) and mediates R-G-D-dependent cell adhesion to FBN1. ITGAV:ITGB3 binds to the Lilrb4a/Gp49b receptor and enhances the Lilrb4a-mediated inhibition of mast cell activation. ITGAV:ITGB3 also suppresses marginal zone B cell antibody production through its interaction with Lilrb4a. In brain, plays a role in synaptic transmission and plasticity. Involved in the regulation of the serotonin neurotransmission, is required to localize to specific compartments within the synapse the serotonin receptor SLC6A4 and for an appropriate reuptake of serotonin. Controls excitatory synaptic strength by regulating GRIA2-containing AMPAR endocytosis, which affects AMPAR abundance and composition. ITGAV:ITGB3 act as a receptor for CD40LG. ITGAV:ITGB3 acts as a receptor for IBSP and promotes cell adhesion and migration to IBSP. This is Integrin beta-3 from Mus musculus (Mouse).